A 686-amino-acid chain; its full sequence is MPNIPLRVNSLATEHPNNAQNSDKMPTFDAIFSHLSAIASHNSHQIIALLPSSDANWPAALIAERLTQAGSKQHLQKQHLHLHLFAQHQASWLKALAESETLASPAKEQIKAICDARVSGSHRLKLVNARLIIDIHLGDPLTQLKDLVSPSLASQAIQGWLANTQATDEALIWQMARLSQDNAEFLLLENNDVNLDKTSNNANTNLLTQLIIKAGFTCYRLNLSLKDDQLVTLAEKPSLASLEIAMVERRALRRQQLDKFAFNPLTQGREGETAIIGGGVASANLALSLAERGKKVSFFCMDKAPGEQASGNKQGAIYPLLTPEHGSLSHYFLLGYLFSRQRIKQLLESGHEIPHDFCGVLQTGHDERSHKRLTKIINAQPWAESIARPVDALQATALAGVTIEHQGIYYPLAGWVSPQAFTRAAISQAERLGKQTSHYQCQITAIRFENQQWYLSAIQDGQKVEFGPYANLVLANGRHLTDFAQTDHLPISGFRGQVSHIPERAPLKDLKTVLCAHGYLTPAHDKLHCTGASYVKDASNLDYSAVEQVENLDKIRTSYGGEWTKAVDITGHSARVGVRMVTRDHAPMMGCAPDFEAISATYISHQQTKKSTKESAKCWQTTSAPVHQGLFILGGLGSRGLTSGPLAAEILAAQLCGELLPATQDILALLNPNRMWMRKLIKGKAL.

The tract at residues 1–258 (MPNIPLRVNS…RRALRRQQLD (258 aa)) is tRNA (mnm(5)s(2)U34)-methyltransferase. An FAD-dependent cmnm(5)s(2)U34 oxidoreductase region spans residues 276 to 686 (IGGGVASANL…MRKLIKGKAL (411 aa)).

This sequence in the N-terminal section; belongs to the methyltransferase superfamily. tRNA (mnm(5)s(2)U34)-methyltransferase family. The protein in the C-terminal section; belongs to the DAO family. It depends on FAD as a cofactor.

The protein localises to the cytoplasm. It catalyses the reaction 5-aminomethyl-2-thiouridine(34) in tRNA + S-adenosyl-L-methionine = 5-methylaminomethyl-2-thiouridine(34) in tRNA + S-adenosyl-L-homocysteine + H(+). Catalyzes the last two steps in the biosynthesis of 5-methylaminomethyl-2-thiouridine (mnm(5)s(2)U) at the wobble position (U34) in tRNA. Catalyzes the FAD-dependent demodification of cmnm(5)s(2)U34 to nm(5)s(2)U34, followed by the transfer of a methyl group from S-adenosyl-L-methionine to nm(5)s(2)U34, to form mnm(5)s(2)U34. This chain is tRNA 5-methylaminomethyl-2-thiouridine biosynthesis bifunctional protein MnmC, found in Shewanella loihica (strain ATCC BAA-1088 / PV-4).